A 150-amino-acid chain; its full sequence is Large ribosomal subunit protein bL9 (150 aa).

This sequence belongs to the bacterial ribosomal protein bL9 family.

In terms of biological role, binds to the 23S rRNA. This is Large ribosomal subunit protein bL9 from Ruthia magnifica subsp. Calyptogena magnifica.